The primary structure comprises 285 residues: Ubiquinone biosynthesis protein COQ4, mitochondrial (285 aa).

The transit peptide at 1 to 11 (MPPTVRQGIRT) directs the protein to the mitochondrion. The Zn(2+) site is built by H166, D167, H170, and E182.

This sequence belongs to the COQ4 family. In terms of assembly, component of a multi-subunit COQ enzyme complex, composed of at least COQ3, COQ4, COQ5, COQ6, COQ7 and COQ9. Requires Zn(2+) as cofactor.

The protein localises to the mitochondrion inner membrane. The enzyme catalyses a 4-hydroxy-3-methoxy-5-(all-trans-polyprenyl)benzoate + H(+) = a 2-methoxy-6-(all-trans-polyprenyl)phenol + CO2. The protein operates within cofactor biosynthesis; ubiquinone biosynthesis. Functionally, lyase that catalyzes the C1-decarboxylation of 4-hydroxy-3-methoxy-5-(all-trans-polyprenyl)benzoic acid into 2-methoxy-6-(all-trans-polyprenyl)phenol during ubiquinone biosynthesis. This chain is Ubiquinone biosynthesis protein COQ4, mitochondrial, found in Paracoccidioides brasiliensis (strain Pb18).